A 212-amino-acid polypeptide reads, in one-letter code: Cell division protein YtfB (212 aa).

Residues 34–50 (GIIIAAIVLVVGFLLPS) form a helical membrane-spanning segment. The disordered stretch occupies residues 88–127 (NDPDQVAPVAPEPIQEGQPEEQPQTTQTQPFQPDSGIDNQ). Residues 99-120 (EPIQEGQPEEQPQTTQTQPFQP) are compositionally biased toward low complexity. Positions 117–212 (PFQPDSGIDN…QPDGSFIRAR (96 aa)) are oapA.

Belongs to the OapA family.

It is found in the cell inner membrane. Its function is as follows. Cell division protein whose function is related to the generation of a transient cell wall structure. Function is linked to the late stages of cell division. In Escherichia coli (strain K12), this protein is Cell division protein YtfB (ytfB).